A 330-amino-acid chain; its full sequence is Ribosomal RNA small subunit methyltransferase C (330 aa).

Belongs to the methyltransferase superfamily. RsmC family. As to quaternary structure, monomer.

It localises to the cytoplasm. The catalysed reaction is guanosine(1207) in 16S rRNA + S-adenosyl-L-methionine = N(2)-methylguanosine(1207) in 16S rRNA + S-adenosyl-L-homocysteine + H(+). Specifically methylates the guanine in position 1207 of 16S rRNA in the 30S particle. The protein is Ribosomal RNA small subunit methyltransferase C of Haemophilus influenzae (strain ATCC 51907 / DSM 11121 / KW20 / Rd).